We begin with the raw amino-acid sequence, 245 residues long: 8-amino-3,8-dideoxy-manno-octulosonate cytidylyltransferase (245 aa).

The protein belongs to the KdsB family.

Its subcellular location is the cytoplasm. It carries out the reaction 8-amino-3,8-dideoxy-alpha-D-manno-octulosonate + CTP = CMP-8-amino-3,8-dideoxy-alpha-D-manno-oct-2-ulosonate + diphosphate. The protein operates within bacterial outer membrane biogenesis; lipopolysaccharide biosynthesis. Activates KDO8N (a required 8-carbon sugar) for incorporation into bacterial lipopolysaccharide in the Shewanella genus. The polypeptide is 8-amino-3,8-dideoxy-manno-octulosonate cytidylyltransferase (Shewanella baltica (strain OS223)).